Consider the following 172-residue polypeptide: MVSNWNWNGMKRRRTPRRGYGRPYKPVVPITRVVVHQSALLKKDEVVGCEIKPDGDVARYKMMKVMLTCTLRMPPGELVNYIIVKSSSPIANWSAAFTTPALLVKESCQDMISIIAKGKVESNGVAGTDCTKSFNKFIRLGAGISQTQHLYVVMYTSVALKLVLEHRVYIEL.

It belongs to the nanoviridae capsid protein family.

The protein resides in the virion. The polypeptide is Capsid protein (DNA-S) (Astragalus sinicus (Chinese milk vetch)).